We begin with the raw amino-acid sequence, 76 residues long: Cyclin-dependent kinases regulatory subunit (76 aa).

This sequence belongs to the CKS family. As to quaternary structure, forms a homohexamer that can probably bind six kinase subunits.

Binds to the catalytic subunit of the cyclin dependent kinases and is essential for their biological function. This chain is Cyclin-dependent kinases regulatory subunit, found in Patella vulgata (Common limpet).